Reading from the N-terminus, the 1103-residue chain is Trophozoite exported protein 1 (1103 aa).

A coiled-coil region spans residues 173–212 (KKEKIEDKKYEQDDEEENEEEEEEEEEEEGEEENKEDEEF). 2 disordered regions span residues 178–210 (EDKK…KEDE) and 271–301 (KSYS…DNGK). Acidic residues predominate over residues 184–210 (QDDEEENEEEEEEEEEEEGEEENKEDE). A compositionally biased stretch (basic and acidic residues) spans 271–280 (KSYSGDEKIN). 2 coiled-coil regions span residues 304-330 (DYVK…LECN) and 478-518 (YKNY…KLNN). Positions 544–601 (YFDEGENPYNRNNKNYRTDNKNSDDNNNNNNYYYNNYNSDDNYNSEDNEYNNGNYRFR) are disordered. Residues 568–585 (DNNNNNNYYYNNYNSDDN) are compositionally biased toward low complexity. 3 coiled-coil regions span residues 650 to 791 (FRNL…LSGI), 819 to 932 (DEKY…IYKK), and 993 to 1030 (NKKL…NLSK). An RING-type zinc finger spans residues 1050 to 1089 (CSVCMENFRNYIIIKCGHIYCNNCIFNNLKTRNRKCPQCK).

Its subcellular location is the host cell membrane. This is Trophozoite exported protein 1 from Plasmodium falciparum (isolate 3D7).